The chain runs to 202 residues: MMIVIMLILSYLIGAFPSGYVIGKLFFKKDIRQFGSGNTGATNSFRVLGKPAGFLVTFLDIFKGFIVVFFPLWLPVQAEGPITTFFTNGLIVGAFAILGHVYPVYLGFKGGKAVATSAGVILGVNPVLLLILAAIFFGILYLTKYVSLSSIIASICCVIGALLIRDYILFIVSIGVGVLLIIRHRTNIVRIFKGEEPKIKWM.

6 helical membrane-spanning segments follow: residues 2 to 22 (MIVIMLILSYLIGAFPSGYVI), 54 to 74 (FLVTFLDIFKGFIVVFFPLWL), 88 to 108 (NGLIVGAFAILGHVYPVYLGF), 120 to 140 (VILGVNPVLLLILAAIFFGIL), 141 to 161 (YLTKYVSLSSIIASICCVIGA), and 162 to 182 (LLIRDYILFIVSIGVGVLLII).

The protein belongs to the PlsY family. In terms of assembly, probably interacts with PlsX.

Its subcellular location is the cell membrane. The enzyme catalyses an acyl phosphate + sn-glycerol 3-phosphate = a 1-acyl-sn-glycero-3-phosphate + phosphate. Its pathway is lipid metabolism; phospholipid metabolism. Functionally, catalyzes the transfer of an acyl group from acyl-phosphate (acyl-PO(4)) to glycerol-3-phosphate (G3P) to form lysophosphatidic acid (LPA). This enzyme utilizes acyl-phosphate as fatty acyl donor, but not acyl-CoA or acyl-ACP. This is Glycerol-3-phosphate acyltransferase from Staphylococcus saprophyticus subsp. saprophyticus (strain ATCC 15305 / DSM 20229 / NCIMB 8711 / NCTC 7292 / S-41).